A 525-amino-acid chain; its full sequence is tRNA-2-methylthio-N(6)-dimethylallyladenosine synthase (525 aa).

One can recognise an MTTase N-terminal domain in the interval Arg14–His130. 6 residues coordinate [4Fe-4S] cluster: Cys23, Cys59, Cys93, Cys167, Cys171, and Cys174. In terms of domain architecture, Radical SAM core spans Arg153–Glu400. The 80-residue stretch at Gln403–Leu482 folds into the TRAM domain.

This sequence belongs to the methylthiotransferase family. MiaB subfamily. As to quaternary structure, monomer. Requires [4Fe-4S] cluster as cofactor.

Its subcellular location is the cytoplasm. It catalyses the reaction N(6)-dimethylallyladenosine(37) in tRNA + (sulfur carrier)-SH + AH2 + 2 S-adenosyl-L-methionine = 2-methylsulfanyl-N(6)-dimethylallyladenosine(37) in tRNA + (sulfur carrier)-H + 5'-deoxyadenosine + L-methionine + A + S-adenosyl-L-homocysteine + 2 H(+). Catalyzes the methylthiolation of N6-(dimethylallyl)adenosine (i(6)A), leading to the formation of 2-methylthio-N6-(dimethylallyl)adenosine (ms(2)i(6)A) at position 37 in tRNAs that read codons beginning with uridine. This chain is tRNA-2-methylthio-N(6)-dimethylallyladenosine synthase, found in Mycobacterium sp. (strain MCS).